The primary structure comprises 783 residues: Polyribonucleotide nucleotidyltransferase 1, mitochondrial (783 aa).

The N-terminal 46 residues, 1 to 46 (MAACRYCCSCLRLRPLSDGPFCLPGRDRALTQLLVRALWSSTGSRA), are a transit peptide targeting the mitochondrion. Lys250, Lys264, Lys285, and Lys289 each carry N6-acetyllysine. Position 552 is an N6-succinyllysine (Lys552). Residues 605-664 (PVVETVQVPLSKRAKFVGPGGYNLKKLQAETGVTISQVDEETFSVFAPTPSALHEARDFI) form the KH domain. Positions 679 to 750 (GAVYTATITE…ADGRMRLSRK (72 aa)) constitute an S1 motif domain. 2 positions are modified to phosphoserine: Ser754 and Ser782.

The protein belongs to the polyribonucleotide nucleotidyltransferase family. In terms of assembly, homotrimer; in free form. Homooligomer. Component of the mitochondrial degradosome (mtEXO) complex which is a heteropentamer containing 2 copies of SUPV3L1 and 3 copies of PNPT1. As part of the mitochondrial degradosome complex, interacts with GRSF1 in an RNA-dependent manner; the interaction enhances the activity of the complex. Interacts with TCL1A; the interaction has no effect on PNPT1 exonuclease activity.

It localises to the cytoplasm. It is found in the mitochondrion matrix. The protein resides in the mitochondrion intermembrane space. The catalysed reaction is RNA(n+1) + phosphate = RNA(n) + a ribonucleoside 5'-diphosphate. RNA-binding protein implicated in numerous RNA metabolic processes. Catalyzes the phosphorolysis of single-stranded polyribonucleotides processively in the 3'-to-5' direction. Mitochondrial intermembrane factor with RNA-processing exoribonulease activity. Component of the mitochondrial degradosome (mtEXO) complex, that degrades 3' overhang double-stranded RNA with a 3'-to-5' directionality in an ATP-dependent manner. Involved in the degradation of non-coding mitochondrial transcripts (MT-ncRNA) and tRNA-like molecules. Required for correct processing and polyadenylation of mitochondrial mRNAs. Plays a role as a cytoplasmic RNA import factor that mediates the translocation of small RNA components like the 5S RNA, the RNA subunit of ribonuclease P and the mitochondrial RNA-processing (MRP) RNA, into the mitochondrial matrix. Plays a role in mitochondrial morphogenesis and respiration; regulates the expression of the electron transport chain (ETC) components at the mRNA and protein levels. In the cytoplasm, shows a 3'-to-5' exoribonuclease mediating mRNA degradation activity; degrades c-myc mRNA upon treatment with IFNB1/IFN-beta, resulting in a growth arrest in melanoma cells. Regulates the stability of specific mature miRNAs in melanoma cells; specifically and selectively degrades miR-221, preferentially. Also plays a role in RNA cell surveillance by cleaning up oxidized RNAs. Binds to the RNA subunit of ribonuclease P, MRP RNA and miR-221 microRNA. In Pongo abelii (Sumatran orangutan), this protein is Polyribonucleotide nucleotidyltransferase 1, mitochondrial (PNPT1).